The chain runs to 93 residues: Small ribosomal subunit protein uS17 (93 aa).

Belongs to the universal ribosomal protein uS17 family. Part of the 30S ribosomal subunit.

One of the primary rRNA binding proteins, it binds specifically to the 5'-end of 16S ribosomal RNA. The protein is Small ribosomal subunit protein uS17 of Rhodococcus erythropolis (strain PR4 / NBRC 100887).